The following is a 195-amino-acid chain: Thymidine kinase (195 aa).

Residues Gly15–Ser22 and Asp88–Gln91 contribute to the ATP site. Residue Glu89 is the Proton acceptor of the active site. Zn(2+) contacts are provided by Cys145, Cys148, Cys183, and Cys186.

The protein belongs to the thymidine kinase family. In terms of assembly, homotetramer.

Its subcellular location is the cytoplasm. The catalysed reaction is thymidine + ATP = dTMP + ADP + H(+). The sequence is that of Thymidine kinase from Bacillus cereus (strain 03BB102).